Reading from the N-terminus, the 225-residue chain is Cytidylate kinase (225 aa).

12–20 (GPSGAGKGT) is an ATP binding site.

The protein belongs to the cytidylate kinase family. Type 1 subfamily.

Its subcellular location is the cytoplasm. The catalysed reaction is CMP + ATP = CDP + ADP. It carries out the reaction dCMP + ATP = dCDP + ADP. The polypeptide is Cytidylate kinase (Edwardsiella ictaluri (strain 93-146)).